Reading from the N-terminus, the 187-residue chain is Adenylate kinase (187 aa).

10–15 (GSGKGT) provides a ligand contact to ATP. Residues 30–59 (STGDLLRSEVVAGTPLGLQAKQVMAQGDLV) form an NMP region. Residues Thr-31, Arg-36, 57–59 (DLV), 85–88 (GYPR), and Gln-92 each bind AMP. Positions 126-136 (GRAQAEGREDD) are LID. Arg-127 contributes to the ATP binding site. Arg-133 and Arg-144 together coordinate AMP. Gly-172 contacts ATP.

Belongs to the adenylate kinase family. As to quaternary structure, monomer.

It localises to the cytoplasm. The catalysed reaction is AMP + ATP = 2 ADP. It participates in purine metabolism; AMP biosynthesis via salvage pathway; AMP from ADP: step 1/1. In terms of biological role, catalyzes the reversible transfer of the terminal phosphate group between ATP and AMP. Plays an important role in cellular energy homeostasis and in adenine nucleotide metabolism. The protein is Adenylate kinase of Xylella fastidiosa (strain 9a5c).